The following is a 241-amino-acid chain: Sugar fermentation stimulation protein homolog (241 aa).

It belongs to the SfsA family.

This Jannaschia sp. (strain CCS1) protein is Sugar fermentation stimulation protein homolog.